Here is a 474-residue protein sequence, read N- to C-terminus: Dihydrolipoyl dehydrogenase (474 aa).

Residues 36 to 44 (EAKDMGGTC), K53, and G119 each bind FAD. C44 and C49 form a disulfide bridge. NAD(+) contacts are provided by residues 184–188 (GSGYI), E207, and 275–278 (ATGR). Positions 323 and 331 each coordinate FAD. The active-site Proton acceptor is H459.

It belongs to the class-I pyridine nucleotide-disulfide oxidoreductase family. As to quaternary structure, homodimer. It depends on FAD as a cofactor.

The protein resides in the cell inner membrane. It catalyses the reaction N(6)-[(R)-dihydrolipoyl]-L-lysyl-[protein] + NAD(+) = N(6)-[(R)-lipoyl]-L-lysyl-[protein] + NADH + H(+). Functionally, lipoamide dehydrogenase is a component of the alpha-ketoacid dehydrogenase complexes. The chain is Dihydrolipoyl dehydrogenase (lpdA) from Synechocystis sp. (strain ATCC 27184 / PCC 6803 / Kazusa).